A 92-amino-acid chain; its full sequence is Alpha-conotoxin VxXXA (92 aa).

Residues 1–24 form the signal peptide; that stretch reads MPKLEMMLLVLLIFPLSYFIAAGG. Residues 25–45 constitute a propeptide that is removed on maturation; that stretch reads QVVQVDRRGDGLAGYLQRGDR. A 4-hydroxyproline; partial mark is found at Pro55, Pro70, and Pro74. 4 disulfide bridges follow: Cys63–Cys72, Cys68–Cys80, Cys73–Cys90, and Cys78–Cys92.

It belongs to the conotoxin D superfamily. Homodimer or pseudo-homodimer. Three dimers exist: homodimer of VxXXA, pseudo-homodimer of both VxXXA and [hydroxyPro-74]VxXXA and homodimer of [hydroxyPro-74]VxXXA. These three components exist in a 1:2:1 ratio. Post-translationally, vxXXA stands for the form with the Pro-55 hydroxylated. A second major form has both Pro-55 and Pro-74 hydroxylated. The two major forms VxXXA and [hydroxyPro-74]VxXXA exist in a 1:1 ratio. Minor forms are [hydroxyPro-70,hydroxyPro-74]VxXXA and [Pro-55]VxXXA. In terms of tissue distribution, expressed by the venom duct.

Its subcellular location is the secreted. Alpha-conotoxins act on postsynaptic membranes, they bind to the nicotinic acetylcholine receptors (nAChR) and thus inhibit them. Through its two C-terminal domains, this homodimeric protein would bind to two nAChR allosteric sites, located outside the nAChR C-loop of the principal binding face and at the adjacent binding interface in a clockwise direction. This toxin specifically blocks mammalian neuronal nAChR of the alpha-7/CHRNA7, alpha-3-beta-2/CHRNA3-CHRNB2 (IC(50)=370 nM) and alpha-4-beta-2/CHRNA4-CHRNB2 subtypes. VxXXB inhibits alpha-7/CHRNA7 and alpha-3-beta-2/CHRNA3-CHRNB2 nAChR subtypes with the highest efficiency, followed by VxXXA and VxXXC. VxXXB and VxXXC inhibit the alpha-4-beta-2/CHRNA4-CHRNB2 nAChR subtype more efficiently than VxXXA. The sequence is that of Alpha-conotoxin VxXXA from Conus vexillum (Flag cone).